Reading from the N-terminus, the 440-residue chain is NADH-quinone oxidoreductase subunit D (440 aa).

Belongs to the complex I 49 kDa subunit family. As to quaternary structure, NDH-1 is composed of 14 different subunits. Subunits NuoB, C, D, E, F, and G constitute the peripheral sector of the complex.

Its subcellular location is the cell membrane. It carries out the reaction a quinone + NADH + 5 H(+)(in) = a quinol + NAD(+) + 4 H(+)(out). In terms of biological role, NDH-1 shuttles electrons from NADH, via FMN and iron-sulfur (Fe-S) centers, to quinones in the respiratory chain. The immediate electron acceptor for the enzyme in this species is believed to be a menaquinone. Couples the redox reaction to proton translocation (for every two electrons transferred, four hydrogen ions are translocated across the cytoplasmic membrane), and thus conserves the redox energy in a proton gradient. The chain is NADH-quinone oxidoreductase subunit D from Acidothermus cellulolyticus (strain ATCC 43068 / DSM 8971 / 11B).